Consider the following 329-residue polypeptide: Transmembrane protein I329L (329 aa).

The signal sequence occupies residues 1–31 (MLRVFIFFVFLGSGLTGRIKPQVTCKYFISE). Residues N32, N39, N44, N76, N82, and N101 are each glycosylated (N-linked (GlcNAc...) asparagine; by host). The Extracellular portion of the chain corresponds to 32 to 239 (NNTWYKYNVT…NTERYKSCYP (208 aa)). The LRR repeat unit spans residues 112–133 (ELKFLDLRYNDLQVIDYNILRK). 2 N-linked (GlcNAc...) asparagine; by host glycosylation sites follow: N185 and N219. A disulfide bridge connects residues C195 and C237. A helical transmembrane segment spans residues 240-260 (LVFISILCSCISFLFLFICLL). Over 261–329 (RSICKKYSCT…EKKVSCSRRK (69 aa)) the chain is Cytoplasmic.

It belongs to the asfivirus I329L family. In terms of processing, highly glycosylated.

Its subcellular location is the host endoplasmic reticulum membrane. It is found in the host Golgi apparatus membrane. Viral TLR3 homolog that probably prevents TLR3 dimerization and subsequent induction of IFN. Inhibits dsRNA-stimulated activation of NF-kB and IRF3. This is Transmembrane protein I329L from Ornithodoros (relapsing fever ticks).